Reading from the N-terminus, the 213-residue chain is NADH-quinone oxidoreductase subunit I (213 aa).

2 consecutive 4Fe-4S ferredoxin-type domains span residues 74–103 and 113–142; these read RFIE…METS and ENYS…HGTE. [4Fe-4S] cluster is bound by residues Cys83, Cys86, Cys89, Cys93, Cys122, Cys125, Cys128, and Cys132.

Belongs to the complex I 23 kDa subunit family. NDH-1 is composed of 14 different subunits. Subunits NuoA, H, J, K, L, M, N constitute the membrane sector of the complex. [4Fe-4S] cluster is required as a cofactor.

It is found in the cell inner membrane. The catalysed reaction is a quinone + NADH + 5 H(+)(in) = a quinol + NAD(+) + 4 H(+)(out). Its function is as follows. NDH-1 shuttles electrons from NADH, via FMN and iron-sulfur (Fe-S) centers, to quinones in the respiratory chain. The immediate electron acceptor for the enzyme in this species is believed to be ubiquinone. Couples the redox reaction to proton translocation (for every two electrons transferred, four hydrogen ions are translocated across the cytoplasmic membrane), and thus conserves the redox energy in a proton gradient. The sequence is that of NADH-quinone oxidoreductase subunit I from Campylobacter jejuni subsp. jejuni serotype O:23/36 (strain 81-176).